Here is a 109-residue protein sequence, read N- to C-terminus: Parvalbumin alpha (109 aa).

EF-hand domains follow at residues 38 to 73 (KTDA…FSAH) and 77 to 109 (LNDT…VAQA). Residues Asp51, Asp53, Ser55, Glu62, Asp90, Asp92, Asp94, Lys96, and Glu101 each contribute to the Ca(2+) site.

It belongs to the parvalbumin family.

In muscle, parvalbumin is thought to be involved in relaxation after contraction. It binds two calcium ions. This Triakis semifasciata (Leopard shark) protein is Parvalbumin alpha.